We begin with the raw amino-acid sequence, 833 residues long: Neuronal tyrosine-phosphorylated phosphoinositide-3-kinase adapter 1 (833 aa).

Disordered stretches follow at residues 1–45, 64–191, 219–423, 645–674, and 736–765; these read MNLL…PGVR, PASQ…LQRL, VFRG…RELP, EEDG…PSGI, and HTPR…QPAR. Residues 8–25 show a composition bias toward basic and acidic residues; it reads TKLEWRQHKEEEAKRSSS. The involved in CYFIP1- and NCKAP1-binding stretch occupies residues 76–181; sequence STMAPRSLSC…DESCAPAPSP (106 aa). Residues 111–120 show a composition bias toward basic residues; sequence PPAKPRRHPS. A compositionally biased stretch (polar residues) spans 162-171; the sequence is SPNTQLSVSF. Over residues 220–239 the composition is skewed to gly residues; that stretch reads FRGGGRSGGGLAGPPLGSGG. Residues 248–257 are compositionally biased toward acidic residues; it reads SDSEDSEAIY. The segment covering 275–285 has biased composition (pro residues); the sequence is GPPPLTAPSPP.

The protein belongs to the NYAP family. In terms of assembly, interacts with ACOT9, ARHGAP26 and PIK3R2. Interacts with components of the WAVE1 complex, CYFIP1 and NCKAP1; this interaction mediates PI3K-WAVE1 association and actin cytoskeleton remodeling. Phosphorylated on tyrosine residues by FYN upon stimulation with CNTN5. Phosphorylation begins at 14 dpc, reaches a peak during perinatal days in brain, then gradually decreases. Expressed predominantly in brain where it is present in the neurons, but not in astrocytes or oligodendrites.

Functionally, activates PI3K and concomitantly recruits the WAVE1 complex to the close vicinity of PI3K and regulates neuronal morphogenesis. The chain is Neuronal tyrosine-phosphorylated phosphoinositide-3-kinase adapter 1 (Nyap1) from Mus musculus (Mouse).